A 334-amino-acid polypeptide reads, in one-letter code: Methionine adenosyltransferase 2 subunit beta (334 aa).

Residues 37–40 (TGLL), 60–62 (FRR), 71–72 (NL), C93, R97, Y159, and L185 contribute to the NADP(+) site. T309 bears the Phosphothreonine mark. The required for interaction with MAT2A stretch occupies residues 319-334 (LWPFLIDKRWRQTVFH).

It belongs to the dTDP-4-dehydrorhamnose reductase family. MAT2B subfamily. As to quaternary structure, heterotrimer; composed of a catalytic MAT2A homodimer that binds one regulatory MAT2B chain. Heterohexamer; composed of a central, catalytic MAT2A homotetramer flanked on either side by a regulatory MAT2B chain. NADP binding increases the affinity for MAT2A.

Its pathway is amino-acid biosynthesis; S-adenosyl-L-methionine biosynthesis; S-adenosyl-L-methionine from L-methionine: step 1/1. Its function is as follows. Regulatory subunit of S-adenosylmethionine synthetase 2, an enzyme that catalyzes the formation of S-adenosylmethionine from methionine and ATP. Regulates MAT2A catalytic activity by changing its kinetic properties, increasing its affinity for L-methionine. Can bind NADP (in vitro). The protein is Methionine adenosyltransferase 2 subunit beta (MAT2B) of Pongo abelii (Sumatran orangutan).